Reading from the N-terminus, the 416-residue chain is tRNA(Met) cytidine acetate ligase (416 aa).

Residues 7–20 (VAEYNPFHNGHLYL), G102, N166, and R191 contribute to the ATP site.

The protein belongs to the TmcAL family.

Its subcellular location is the cytoplasm. It carries out the reaction cytidine(34) in elongator tRNA(Met) + acetate + ATP = N(4)-acetylcytidine(34) in elongator tRNA(Met) + AMP + diphosphate. In terms of biological role, catalyzes the formation of N(4)-acetylcytidine (ac(4)C) at the wobble position of elongator tRNA(Met), using acetate and ATP as substrates. First activates an acetate ion to form acetyladenylate (Ac-AMP) and then transfers the acetyl group to tRNA to form ac(4)C34. The protein is tRNA(Met) cytidine acetate ligase of Syntrophomonas wolfei subsp. wolfei (strain DSM 2245B / Goettingen).